A 286-amino-acid polypeptide reads, in one-letter code: Beta-lactamase SHV-3 (286 aa).

An N-terminal signal peptide occupies residues 1-21 (MRYIRLCIISLLATLPLAVHA). The active-site Acyl-ester intermediate is the serine 66. Cysteine 73 and cysteine 119 are disulfide-bonded. The Proton acceptor role is filled by glutamate 164. 230–232 (KTG) contributes to the substrate binding site.

The protein belongs to the class-A beta-lactamase family.

The catalysed reaction is a beta-lactam + H2O = a substituted beta-amino acid. This enzyme hydrolyzes cefotaxime, ceftazidime and other broad spectrum cephalosporins. The sequence is that of Beta-lactamase SHV-3 (bla) from Klebsiella pneumoniae.